The chain runs to 39 residues: Photosystem II reaction center protein L (39 aa).

Residues 18 to 38 traverse the membrane as a helical segment; that stretch reads SLYLGVLSVLVLGILFSSYFF.

This sequence belongs to the PsbL family. As to quaternary structure, PSII is composed of 1 copy each of membrane proteins PsbA, PsbB, PsbC, PsbD, PsbE, PsbF, PsbH, PsbI, PsbJ, PsbK, PsbL, PsbM, PsbT, PsbX, PsbY, Psb30/Ycf12, peripheral proteins PsbO, CyanoQ (PsbQ), PsbU, PsbV and a large number of cofactors. It forms dimeric complexes.

Its subcellular location is the cellular thylakoid membrane. Functionally, one of the components of the core complex of photosystem II (PSII). PSII is a light-driven water:plastoquinone oxidoreductase that uses light energy to abstract electrons from H(2)O, generating O(2) and a proton gradient subsequently used for ATP formation. It consists of a core antenna complex that captures photons, and an electron transfer chain that converts photonic excitation into a charge separation. This subunit is found at the monomer-monomer interface and is required for correct PSII assembly and/or dimerization. In Prochlorococcus marinus (strain MIT 9515), this protein is Photosystem II reaction center protein L.